The chain runs to 374 residues: tRNA-specific 2-thiouridylase MnmA (374 aa).

Residues 12-19 (GMSGGVDS) and methionine 38 each bind ATP. The segment at 98-100 (NPD) is interaction with target base in tRNA. Cysteine 103 serves as the catalytic Nucleophile. An intrachain disulfide couples cysteine 103 to cysteine 207. Glycine 128 is a binding site for ATP. The segment at 157-159 (KDQ) is interaction with tRNA. Catalysis depends on cysteine 207, which acts as the Cysteine persulfide intermediate. Residues 321–322 (RY) form an interaction with tRNA region.

The protein belongs to the MnmA/TRMU family.

The protein resides in the cytoplasm. It catalyses the reaction S-sulfanyl-L-cysteinyl-[protein] + uridine(34) in tRNA + AH2 + ATP = 2-thiouridine(34) in tRNA + L-cysteinyl-[protein] + A + AMP + diphosphate + H(+). In terms of biological role, catalyzes the 2-thiolation of uridine at the wobble position (U34) of tRNA, leading to the formation of s(2)U34. This chain is tRNA-specific 2-thiouridylase MnmA, found in Aliivibrio fischeri (strain ATCC 700601 / ES114) (Vibrio fischeri).